A 411-amino-acid polypeptide reads, in one-letter code: Secretion apparatus protein BsaZ (411 aa).

4 helical membrane-spanning segments follow: residues 28-48, 80-100, 137-157, and 175-195; these read IVAL…VDLT, IAAP…LVQS, ALLY…LYHA, and IVLT…VLIL. A disordered region spans residues 341-411; the sequence is AANRGGPPPE…APARTGDQNA (71 aa). The span at 370 to 404 shows a compositional bias: low complexity; that stretch reads DACADNAFPDDAPPGAAAPNAGSPDGPAPDGGAPA.

It belongs to the type III secretion exporter family.

Its subcellular location is the cell membrane. Part of the bsa type III secretion system, is involved in the intracellular replication of invading bacteria inside the host cell. Probably necessary for the lysis of the vacuole membrane and escape into the host cell cytoplasm. This chain is Secretion apparatus protein BsaZ (bsaZ), found in Burkholderia pseudomallei (strain 1026b).